The chain runs to 537 residues: Endoprotease aex-5 (537 aa).

The first 17 residues, methionine 1–cysteine 17, serve as a signal peptide directing secretion. A propeptide spanning residues glutamine 18–arginine 99 is cleaved from the precursor. The region spanning valine 111–valine 413 is the Peptidase S8 domain. Residue asparagine 129 is glycosylated (N-linked (GlcNAc...) asparagine). Residues aspartate 139 and histidine 178 each act as charge relay system in the active site. A disulfide bridge links cysteine 286 with cysteine 316. Serine 346 functions as the Charge relay system in the catalytic mechanism. Asparagine 380 carries an N-linked (GlcNAc...) asparagine glycan. A P/Homo B domain is found at leucine 407–serine 537.

It belongs to the peptidase S8 family. Furin subfamily.

The protein resides in the secreted. Functionally, probable serine endoprotease which cleaves preproteins at paired basic amino acids. May process FMRFamide-like (flp) and neuropeptide-like protein (nlp) neuropeptides. In muscles, involved in neuronal retrograde signaling by regulating presynaptic activity and localization of synaptic vesicle fusion protein unc-13 at the neuromuscular junction (NMJ). Acts in the intestine to regulate anterior body muscle contractions (aBOC) and the expulsion steps during the defecation motor program (DMP). Probably by regulating DMP, required for fatty acid uptake by intestinal cells and therefore regulates the levels of triglycerides in the intestine. Plays a role in locomotion. This is Endoprotease aex-5 from Caenorhabditis elegans.